We begin with the raw amino-acid sequence, 354 residues long: 2-methylisoborneol synthase (354 aa).

The tract at residues 1 to 29 (MIELIGHETPVPSQQQHTGGVRGTSACTP) is disordered. Mg(2+) contacts are provided by Asp-113, Asp-114, Glu-118, Asn-264, Ser-268, and Glu-272.

This sequence belongs to the terpene synthase family. 2-methylisoborneol synthase subfamily. It depends on Mg(2+) as a cofactor.

It carries out the reaction (E)-2-methylgeranyl diphosphate + H2O = 2-methylisoborneol + diphosphate. Its function is as follows. Catalyzes the cyclization of 2-methylgeranyl diphosphate (2-MeGPP) to 2-methylisoborneol (2-MIB), which likely involves the intermediacy of 2-methyllinalyl diphosphate. The protein is 2-methylisoborneol synthase of Saccharopolyspora erythraea (strain ATCC 11635 / DSM 40517 / JCM 4748 / NBRC 13426 / NCIMB 8594 / NRRL 2338).